The following is a 124-amino-acid chain: Small ribosomal subunit protein bS16 (124 aa).

The segment at 82 to 124 (LAKRPARSNPTKAVPGKKAQERAAEAKQKAEDAAAAAAESAAE) is disordered. Positions 99–113 (KAQERAAEAKQKAED) are enriched in basic and acidic residues. Low complexity predominate over residues 114–124 (AAAAAAESAAE).

It belongs to the bacterial ribosomal protein bS16 family.

The chain is Small ribosomal subunit protein bS16 from Sinorhizobium fredii (strain NBRC 101917 / NGR234).